A 109-amino-acid polypeptide reads, in one-letter code: Urocortin-2 (109 aa).

The first 22 residues, methionine 1 to isoleucine 22, serve as a signal peptide directing secretion. Positions proline 23–threonine 67 are excised as a propeptide. The segment at threonine 24–lysine 60 is disordered. The segment covering proline 33 to threonine 50 has biased composition (low complexity). Residues glycine 51–lysine 60 are compositionally biased toward polar residues. Residue valine 106 is modified to Valine amide; partial.

The protein belongs to the sauvagine/corticotropin-releasing factor/urotensin I family. In terms of assembly, binds with high affinity to CRF receptors 2-alpha and 2-beta. Glycosylated.

It localises to the secreted. In terms of biological role, suppresses food intake, delays gastric emptying and decreases heat-induced edema. Might represent an endogenous ligand for maintaining homeostasis after stress. In Rattus norvegicus (Rat), this protein is Urocortin-2 (Ucn2).